The sequence spans 169 residues: Large ribosomal subunit protein uL10 (169 aa).

Belongs to the universal ribosomal protein uL10 family. In terms of assembly, part of the ribosomal stalk of the 50S ribosomal subunit. The N-terminus interacts with L11 and the large rRNA to form the base of the stalk. The C-terminus forms an elongated spine to which L12 dimers bind in a sequential fashion forming a multimeric L10(L12)X complex.

In terms of biological role, forms part of the ribosomal stalk, playing a central role in the interaction of the ribosome with GTP-bound translation factors. The protein is Large ribosomal subunit protein uL10 of Rickettsia massiliae (strain Mtu5).